Here is a 498-residue protein sequence, read N- to C-terminus: Guanosine-5'-triphosphate,3'-diphosphate pyrophosphatase (498 aa).

Belongs to the GppA/Ppx family. GppA subfamily.

It catalyses the reaction guanosine 3'-diphosphate 5'-triphosphate + H2O = guanosine 3',5'-bis(diphosphate) + phosphate + H(+). It participates in purine metabolism; ppGpp biosynthesis; ppGpp from GTP: step 2/2. Its function is as follows. Catalyzes the conversion of pppGpp to ppGpp. Guanosine pentaphosphate (pppGpp) is a cytoplasmic signaling molecule which together with ppGpp controls the 'stringent response', an adaptive process that allows bacteria to respond to amino acid starvation, resulting in the coordinated regulation of numerous cellular activities. This chain is Guanosine-5'-triphosphate,3'-diphosphate pyrophosphatase, found in Pectobacterium atrosepticum (strain SCRI 1043 / ATCC BAA-672) (Erwinia carotovora subsp. atroseptica).